Here is a 107-residue protein sequence, read N- to C-terminus: Thiosulfate sulfurtransferase GlpE (107 aa).

In terms of domain architecture, Rhodanese spans 19–107; that stretch reads QDLNAVLVDI…WHKAGLPVEK (89 aa). Catalysis depends on C67, which acts as the Cysteine persulfide intermediate.

It belongs to the GlpE family.

It is found in the cytoplasm. It carries out the reaction thiosulfate + hydrogen cyanide = thiocyanate + sulfite + 2 H(+). It catalyses the reaction thiosulfate + [thioredoxin]-dithiol = [thioredoxin]-disulfide + hydrogen sulfide + sulfite + 2 H(+). Its function is as follows. Transferase that catalyzes the transfer of sulfur from thiosulfate to thiophilic acceptors such as cyanide or dithiols. May function in a CysM-independent thiosulfate assimilation pathway by catalyzing the conversion of thiosulfate to sulfite, which can then be used for L-cysteine biosynthesis. In Aliivibrio fischeri (strain ATCC 700601 / ES114) (Vibrio fischeri), this protein is Thiosulfate sulfurtransferase GlpE.